The following is a 219-amino-acid chain: Small ribosomal subunit protein uS3c (219 aa).

Residues 39–109 (IRQYIEKNLS…QIRINVIEVK (71 aa)) form the KH type-2 domain.

This sequence belongs to the universal ribosomal protein uS3 family. Part of the 30S ribosomal subunit.

It localises to the plastid. Its subcellular location is the cyanelle. This Cyanophora paradoxa protein is Small ribosomal subunit protein uS3c (rps3).